A 99-amino-acid chain; its full sequence is UPF0213 protein PC1_0597 (99 aa).

The region spanning 8-83 (PQWYLYILRT…KQLSKNQKER (76 aa)) is the GIY-YIG domain.

It belongs to the UPF0213 family.

The protein is UPF0213 protein PC1_0597 of Pectobacterium carotovorum subsp. carotovorum (strain PC1).